Reading from the N-terminus, the 173-residue chain is NADH-ubiquinone oxidoreductase chain 6 (173 aa).

Transmembrane regions (helical) follow at residues 1–21, 27–47, 48–68, 87–107, and 139–159; these read MTYF…AVAS, YGVV…LSLG, VSFV…VVFV, VVGY…VGGF, and CGVG…FVVL.

It belongs to the complex I subunit 6 family.

It localises to the mitochondrion membrane. The catalysed reaction is a ubiquinone + NADH + 5 H(+)(in) = a ubiquinol + NAD(+) + 4 H(+)(out). In terms of biological role, core subunit of the mitochondrial membrane respiratory chain NADH dehydrogenase (Complex I) that is believed to belong to the minimal assembly required for catalysis. Complex I functions in the transfer of electrons from NADH to the respiratory chain. The immediate electron acceptor for the enzyme is believed to be ubiquinone. The chain is NADH-ubiquinone oxidoreductase chain 6 (MT-ND6) from Aethia pusilla (Least auklet).